A 283-amino-acid chain; its full sequence is Bifunctional protein FolD (283 aa).

NADP(+) is bound by residues 166–168 and isoleucine 232; that span reads GAS.

Belongs to the tetrahydrofolate dehydrogenase/cyclohydrolase family. In terms of assembly, homodimer.

The enzyme catalyses (6R)-5,10-methylene-5,6,7,8-tetrahydrofolate + NADP(+) = (6R)-5,10-methenyltetrahydrofolate + NADPH. It catalyses the reaction (6R)-5,10-methenyltetrahydrofolate + H2O = (6R)-10-formyltetrahydrofolate + H(+). It participates in one-carbon metabolism; tetrahydrofolate interconversion. In terms of biological role, catalyzes the oxidation of 5,10-methylenetetrahydrofolate to 5,10-methenyltetrahydrofolate and then the hydrolysis of 5,10-methenyltetrahydrofolate to 10-formyltetrahydrofolate. This Wigglesworthia glossinidia brevipalpis protein is Bifunctional protein FolD.